The following is a 319-amino-acid chain: Malate dehydrogenase (319 aa).

Residues 11–16 (GAGNVG) and D36 contribute to the NAD(+) site. Substrate is bound by residues R85 and R91. Residues N98 and 121–123 (VSN) each bind NAD(+). N123 and R154 together coordinate substrate. H178 acts as the Proton acceptor in catalysis.

Belongs to the LDH/MDH superfamily. MDH type 3 family.

The enzyme catalyses (S)-malate + NAD(+) = oxaloacetate + NADH + H(+). In terms of biological role, catalyzes the reversible oxidation of malate to oxaloacetate. The chain is Malate dehydrogenase from Sulfurimonas denitrificans (strain ATCC 33889 / DSM 1251) (Thiomicrospira denitrificans (strain ATCC 33889 / DSM 1251)).